The chain runs to 996 residues: P3N-PIPO polyprotein (996 aa).

The Peptidase S30 domain maps to 173 to 313 (VVRSASVNNL…VFFYDDVDHY (141 aa)). Residues His-226, Glu-235, and Ser-267 each act as for P1 proteinase activity in the active site. The short motif at 365 to 368 (KLSC) is the Involved in interaction with stylet and aphid transmission element. The Involved in virions binding and aphid transmission signature appears at 621 to 623 (PTK). The 123-residue stretch at 647–769 (MYIAKEGYCY…QSEMKHYRVG (123 aa)) folds into the Peptidase C6 domain. Residues Cys-655 and His-728 each act as for helper component proteinase activity in the active site.

The protein belongs to the potyviridae P3N-PIPO polyprotein family. In terms of assembly, interacts (via PIPO domain) with host PCaP1 protein; this interaction may help to anchor the movement complex to the plasma membrane from which the complex could move to the plasmodesmata. Post-translationally, potyviral RNA is expressed as two polyproteins which undergo post-translational proteolytic processing. Genome polyprotein is processed by NIa-pro, P1 and HC-pro proteinases resulting in the production of at least ten individual proteins. P3N-PIPO is cleaved by P1 and HC-pro proteinases resulting in the production of three individual proteins. The P1 proteinase and the HC-pro cleave only their respective C-termini autocatalytically.

It is found in the host cell junction. Its subcellular location is the host plasmodesma. It carries out the reaction Hydrolyzes a Gly-|-Gly bond at its own C-terminus, commonly in the sequence -Tyr-Xaa-Val-Gly-|-Gly, in the processing of the potyviral polyprotein.. In terms of biological role, required for aphid transmission and also has proteolytic activity. Only cleaves a Gly-Gly dipeptide at its own C-terminus. Interacts with virions and aphid stylets. Acts as a suppressor of RNA-mediated gene silencing, also known as post-transcriptional gene silencing (PTGS), a mechanism of plant viral defense that limits the accumulation of viral RNAs. May have RNA-binding activity. Allows efficient cell to cell propagation, by bypassing the host cell wall barrier. Transports viral genome to neighboring plant cells directly through plasmosdesmata, without any budding. The sequence is that of P3N-PIPO polyprotein from Zucchini yellow mosaic virus (strain Reunion Island) (ZYMV).